Consider the following 430-residue polypeptide: Enolase (430 aa).

Gln-165 lines the (2R)-2-phosphoglycerate pocket. Residue Glu-207 is the Proton donor of the active site. Mg(2+)-binding residues include Asp-244, Glu-287, and Asp-314. (2R)-2-phosphoglycerate contacts are provided by Lys-339, Arg-368, Ser-369, and Lys-390. The active-site Proton acceptor is the Lys-339.

It belongs to the enolase family. Component of the RNA degradosome, a multiprotein complex involved in RNA processing and mRNA degradation. Mg(2+) is required as a cofactor.

The protein resides in the cytoplasm. Its subcellular location is the secreted. The protein localises to the cell surface. It catalyses the reaction (2R)-2-phosphoglycerate = phosphoenolpyruvate + H2O. The protein operates within carbohydrate degradation; glycolysis; pyruvate from D-glyceraldehyde 3-phosphate: step 4/5. Its function is as follows. Catalyzes the reversible conversion of 2-phosphoglycerate (2-PG) into phosphoenolpyruvate (PEP). It is essential for the degradation of carbohydrates via glycolysis. The sequence is that of Enolase from Xanthomonas oryzae pv. oryzae (strain MAFF 311018).